The primary structure comprises 355 residues: Peptide chain release factor 1 (355 aa).

Gln-230 carries the post-translational modification N5-methylglutamine.

The protein belongs to the prokaryotic/mitochondrial release factor family. Post-translationally, methylated by PrmC. Methylation increases the termination efficiency of RF1.

Its subcellular location is the cytoplasm. Functionally, peptide chain release factor 1 directs the termination of translation in response to the peptide chain termination codons UAG and UAA. The polypeptide is Peptide chain release factor 1 (Geotalea uraniireducens (strain Rf4) (Geobacter uraniireducens)).